We begin with the raw amino-acid sequence, 49 residues long: Disintegrin eristostatin (49 aa).

One can recognise a Disintegrin domain in the interval 1-49 (QEEPCATGPCCRRCKFKRAGKVCRVARGDWNDDYCTGKSCDCPKNPWNG). Cystine bridges form between C5–C14, C10–C35, C11–C40, and C23–C42. A Cell attachment site motif is present at residues 27–29 (RGD).

It belongs to the venom metalloproteinase (M12B) family. P-II subfamily. P-IIa sub-subfamily. Monomer. In terms of tissue distribution, expressed by the venom gland.

Its subcellular location is the secreted. Functionally, is a potent inhibitor of ADP-induced platelet aggregation. Acts by binding to alpha-IIb/beta-3 (ITGA2B/ITGB3) receptor on the platelet surface. Binds with the same high affinity to resting and activated platelets. Also binds the alpha-4/beta-1 (ITGA4/ITGB1) integrin. Is a potent inhibitor of human and murine melanoma metastases in mouse model systems, also due to the inhibition of binding between the alpha-4/beta-1 integrin and the vascular cell adhesion protein VCAM1. Reacts neither with the integrin alpha-V/beta-3 (ITGAV/ITGB3) vitronectin receptor nor with the integrin alpha-5/beta-1 (ITGA5/ITGB1) fibronectin receptor. Has no effect on cell proliferation or angiogenesis. Specifically inhibits cell migration on fibronectin, but not that on collagen IV or laminin. May involve fibronectin-binding integrins that mediate cell migration. In Eristicophis macmahoni (Leaf-nosed viper), this protein is Disintegrin eristostatin.